Consider the following 251-residue polypeptide: MRRKIVAGNWKLHGSRAFATELVAKLAAHMPLEGIDVVILPPLPYLGDLIEDFEAHHLSFGAQDVSSNEKGAYTGEVSASMLVDVGAGYGLVGHSERRQYHQESSELVARKFAAAIHAGLTPVLCVGESLEQREAGQTEAILRAQLEPVLALVGSAGFAGAVLAYEPIWAIGTGCTATPEQAQAVHAFLRGEVAKADARIADSLPILYGGSVKPDNAGELFAQPDVDGGLVGGASLVAEDFLAIARAAAAC.

9 to 11 (NWK) is a binding site for substrate. Histidine 94 serves as the catalytic Electrophile. The active-site Proton acceptor is glutamate 166. Substrate-binding positions include glycine 172, serine 211, and 232 to 233 (GG).

It belongs to the triosephosphate isomerase family. As to quaternary structure, homodimer.

It localises to the cytoplasm. The enzyme catalyses D-glyceraldehyde 3-phosphate = dihydroxyacetone phosphate. The protein operates within carbohydrate biosynthesis; gluconeogenesis. It functions in the pathway carbohydrate degradation; glycolysis; D-glyceraldehyde 3-phosphate from glycerone phosphate: step 1/1. Functionally, involved in the gluconeogenesis. Catalyzes stereospecifically the conversion of dihydroxyacetone phosphate (DHAP) to D-glyceraldehyde-3-phosphate (G3P). The protein is Triosephosphate isomerase of Xanthomonas oryzae pv. oryzae (strain MAFF 311018).